The primary structure comprises 103 residues: CLAVATA3/ESR (CLE)-related protein 16 (103 aa).

A signal peptide spans 1–21 (MEACSRKRRRRRAYTTSTTGY). Positions 71-103 (VSFTGQRREEENRDEVYKDDKRLVHTGPNPLHN) are disordered. Basic and acidic residues predominate over residues 76–93 (QRREEENRDEVYKDDKRL). At P98 the chain carries Hydroxyproline. O-linked (Ara...) hydroxyproline glycosylation is present at P98.

Belongs to the CLV3/ESR signal peptide family. Post-translationally, the O-glycosylation (arabinosylation) of the hydroxyproline Pro-98 enhances binding affinity of the CLE16p peptide for its receptor. Expressed in roots, stems, apex, seedlings, leaves, flowers and siliques.

It is found in the secreted. The protein localises to the extracellular space. Extracellular signal peptide that regulates cell fate. Represses root apical meristem maintenance. Regulates the transition of protophloem cells from proliferation to differentiation, thus impinging on postembryonic growth capacity of the root meristem; this signaling pathway requires CRN and CLV2. The polypeptide is CLAVATA3/ESR (CLE)-related protein 16 (Arabidopsis thaliana (Mouse-ear cress)).